Consider the following 210-residue polypeptide: DARARSFVARAAAEYDLPLVGNKAPDFAAEAVFDQEFINVKLSDYIGKKYVILFFYPLDFTFVCPTEITAFSDRHEEFEKINTEILGVSVDSVFSHLAWVQTERKSGGLGDLKYPLVSDVTKSISKSFGVLIPDQGIALRGLFIIDKEGVIQHSTINNLGIGRSVDETLRTLQALQYVKKPDEVCPAGWKPGEKSMKPDPKGSKEYFAAI.

A chloroplast-targeting transit peptide spans Asp1 to Arg10. The 160-residue stretch at Pro18–Tyr177 folds into the Thioredoxin domain. Cys64 serves as the catalytic Cysteine sulfenic acid (-SOH) intermediate.

Belongs to the peroxiredoxin family. AhpC/Prx1 subfamily. In terms of assembly, homodimer; disulfide-linked, upon oxidation. As to expression, expressed in leaf blade, sheath, basiplast, stem and green spike. Maximal expression in young developing shoots segments where cell division and elongation take place. Not expressed in roots.

The protein localises to the plastid. The protein resides in the chloroplast. It catalyses the reaction a hydroperoxide + [thioredoxin]-dithiol = an alcohol + [thioredoxin]-disulfide + H2O. Thiol-specific peroxidase that catalyzes the reduction of hydrogen peroxide and organic hydroperoxides to water and alcohols, respectively. Plays a role in cell protection against oxidative stress by detoxifying peroxides. May be an antioxidant enzyme particularly in the developing shoot and photosynthesizing leaf. The sequence is that of 2-Cys peroxiredoxin BAS1, chloroplastic (BAS1) from Hordeum vulgare (Barley).